Here is a 722-residue protein sequence, read N- to C-terminus: Polyribonucleotide nucleotidyltransferase (722 aa).

Mg(2+)-binding residues include aspartate 495 and aspartate 501. The KH domain occupies 562–621 (PRLLSFRIDPELIGTVIGPGGRTIKGITERTNTKIDIEDGGIVTIASHDGVAAEEAQKII). An S1 motif domain is found at 631 to 699 (GEIFTGSITR…NRGRINLTLR (69 aa)). Over residues 701 to 711 (VSQNNNDMNYP) the composition is skewed to polar residues. The segment at 701 to 722 (VSQNNNDMNYPQPTPTPVAPLN) is disordered. Positions 712 to 722 (QPTPTPVAPLN) are enriched in pro residues.

The protein belongs to the polyribonucleotide nucleotidyltransferase family. The cofactor is Mg(2+).

It localises to the cytoplasm. The enzyme catalyses RNA(n+1) + phosphate = RNA(n) + a ribonucleoside 5'-diphosphate. In terms of biological role, involved in mRNA degradation. Catalyzes the phosphorolysis of single-stranded polyribonucleotides processively in the 3'- to 5'-direction. In Prochlorococcus marinus (strain MIT 9211), this protein is Polyribonucleotide nucleotidyltransferase.